A 288-amino-acid chain; its full sequence is Extracellular ribonuclease (288 aa).

Residues 1-26 (MTKKAWFLPLVCVLLISGWLAPAASA) form the signal peptide.

It localises to the secreted. In terms of biological role, mg(2+)-activated ribonuclease which hydrolyzes RNA apparently nonspecifically into oligonucleotides with 5'-terminal phosphate. The sequence is that of Extracellular ribonuclease (bsn) from Bacillus subtilis (strain 168).